A 373-amino-acid polypeptide reads, in one-letter code: DNA replication and repair protein RecF (373 aa).

30 to 37 (GENAQGKT) contacts ATP.

This sequence belongs to the RecF family.

The protein resides in the cytoplasm. Its function is as follows. The RecF protein is involved in DNA metabolism; it is required for DNA replication and normal SOS inducibility. RecF binds preferentially to single-stranded, linear DNA. It also seems to bind ATP. This Limosilactobacillus fermentum (strain NBRC 3956 / LMG 18251) (Lactobacillus fermentum) protein is DNA replication and repair protein RecF.